A 544-amino-acid chain; its full sequence is tRNA pseudouridine synthase 1 (544 aa).

2 stretches are compositionally biased toward basic and acidic residues: residues 1–10 (MSEENLRPAY) and 31–61 (RKADFDDEKDKKKDNDKHIDKRPKSGPRLDE). Residues 1-74 (MSEENLRPAY…PLPKEPRLPK (74 aa)) are disordered. Aspartate 134 (nucleophile) is an active-site residue. Positions 495–544 (IPGLTDAPESNKKIKQRKRMEEEEAASKKAEISSTTQSNEPEVQPEAAAN) are disordered. Basic and acidic residues predominate over residues 513–525 (RMEEEEAASKKAE).

It belongs to the tRNA pseudouridine synthase TruA family. It depends on Zn(2+) as a cofactor.

It is found in the nucleus. It carries out the reaction a uridine in tRNA = a pseudouridine in tRNA. The catalysed reaction is uridine in snRNA = pseudouridine in snRNA. It catalyses the reaction a uridine in mRNA = a pseudouridine in mRNA. Formation of pseudouridine at positions 27 and 28 in the anticodon stem and loop of transfer RNAs; at positions 34 and 36 of intron-containing precursor tRNA(Ile) and at position 35 in the intron-containing tRNA(Tyr). Catalyzes pseudouridylation at position 44 in U2 snRNA. Also catalyzes pseudouridylation of mRNAs. The sequence is that of tRNA pseudouridine synthase 1 (PUS1) from Saccharomyces cerevisiae (strain ATCC 204508 / S288c) (Baker's yeast).